A 702-amino-acid polypeptide reads, in one-letter code: MVKTFEMKLGGRPFVVEIGKVAELAQGSCMIKYGDTTVLVTACASKEPKEGLDFFPLSCDYEEKLYAVGKIPGGFIKRESRPSEKATLTARLIDRPIRPLFPKGYHNDVQVIATVLSMDQDCPPDISAMIGSSIALSVSNIPFMGPTASVSVGMIDGEYIVNPTSKQKEDSTLELIVSGTKNAIMMIEAGANELTEAQILDAIMFAHEEIKKIVAFIENIVSEVGKPKSEVIAKQMDSNLLTEVVIFLDTKLANAIKTFDKTERNENIQAVSAEALDYFEEKYEGRSKEVHDILSMLIKVETRKMITSEGIRPDNRKLDEIRPISTQVGILPRAHGTGLFNRGETQVLTITTLGDLRDAQRIDGIGEEDEKRYMHHYNFPPYSVGETRFMRGPSRREIGHGALVERALLPMIPSKEDFPYAIRLVSEVLTCNGSSSQASVCGSTLSLMDAGVPIKRMVAGIAMGLIKEDDQVVILSDIQGMEDALGDMDLKVAGTEEGITAMQMDIKIAGIDRGIMETALEQARIGRLHILNKMKESITSPRIELSSYAPKVTQIKVHPDKVREVIGAGGKVINKIIDETGCKITIENDGTIYVAAPDQESSRRAVEMIELIVKDPVVGEVYTGKVIKIMDFGAFVEILPGKEGLVHISNLAHERVTKVTDVLAEGDLIEVKLMEINPQGKIGLSRKALLPKPETKSETQSE.

2 residues coordinate Mg(2+): D483 and D489. The 60-residue stretch at 550 to 609 (PKVTQIKVHPDKVREVIGAGGKVINKIIDETGCKITIENDGTIYVAAPDQESSRRAVEMI) folds into the KH domain. Positions 619–687 (GEVYTGKVIK…PQGKIGLSRK (69 aa)) constitute an S1 motif domain.

Belongs to the polyribonucleotide nucleotidyltransferase family. It depends on Mg(2+) as a cofactor.

It is found in the cytoplasm. It catalyses the reaction RNA(n+1) + phosphate = RNA(n) + a ribonucleoside 5'-diphosphate. Functionally, involved in mRNA degradation. Catalyzes the phosphorolysis of single-stranded polyribonucleotides processively in the 3'- to 5'-direction. The sequence is that of Polyribonucleotide nucleotidyltransferase 3 from Alkaliphilus metalliredigens (strain QYMF).